The chain runs to 358 residues: Isopentenyl-diphosphate delta-isomerase (358 aa).

A substrate-binding site is contributed by 12 to 13 (RK). FMN-binding positions include 69–71 (AMT), Ser-99, and Asn-128. Gln-158 provides a ligand contact to substrate. Glu-159 provides a ligand contact to Mg(2+). FMN is bound by residues Lys-190, Thr-220, 267 to 269 (GIR), and 288 to 289 (AG).

This sequence belongs to the IPP isomerase type 2 family. As to quaternary structure, homooctamer. Dimer of tetramers. Requires FMN as cofactor. The cofactor is NADPH. Mg(2+) is required as a cofactor.

It localises to the cytoplasm. It carries out the reaction isopentenyl diphosphate = dimethylallyl diphosphate. Functionally, involved in the biosynthesis of isoprenoids. Catalyzes the 1,3-allylic rearrangement of the homoallylic substrate isopentenyl (IPP) to its allylic isomer, dimethylallyl diphosphate (DMAPP). The protein is Isopentenyl-diphosphate delta-isomerase of Listeria monocytogenes serotype 4b (strain F2365).